A 327-amino-acid polypeptide reads, in one-letter code: Aspartate--ammonia ligase (327 aa).

Belongs to the class-II aminoacyl-tRNA synthetase family. AsnA subfamily.

It localises to the cytoplasm. It catalyses the reaction L-aspartate + NH4(+) + ATP = L-asparagine + AMP + diphosphate + H(+). It functions in the pathway amino-acid biosynthesis; L-asparagine biosynthesis; L-asparagine from L-aspartate (ammonia route): step 1/1. The sequence is that of Aspartate--ammonia ligase from Mycoplasmoides gallisepticum (strain R(low / passage 15 / clone 2)) (Mycoplasma gallisepticum).